Consider the following 484-residue polypeptide: Glutamate--tRNA ligase (484 aa).

The 'HIGH' region motif lies at 11–21; sequence PSPTGYLHIGN. Residues 252 to 256 carry the 'KMSKS' region motif; that stretch reads KLSKR. Residue K255 coordinates ATP.

Belongs to the class-I aminoacyl-tRNA synthetase family. Glutamate--tRNA ligase type 1 subfamily. As to quaternary structure, monomer.

Its subcellular location is the cytoplasm. The catalysed reaction is tRNA(Glu) + L-glutamate + ATP = L-glutamyl-tRNA(Glu) + AMP + diphosphate. Functionally, catalyzes the attachment of glutamate to tRNA(Glu) in a two-step reaction: glutamate is first activated by ATP to form Glu-AMP and then transferred to the acceptor end of tRNA(Glu). The protein is Glutamate--tRNA ligase of Staphylococcus haemolyticus (strain JCSC1435).